A 542-amino-acid polypeptide reads, in one-letter code: CTP synthase (542 aa).

Residues 1–264 (MKFIFITGGV…AKLIINKLKL (264 aa)) are amidoligase domain. Ser-12 is a CTP binding site. Ser-12 contributes to the UTP binding site. 13–18 (SLGKGI) is an ATP binding site. L-glutamine is bound at residue Tyr-53. ATP is bound at residue Asp-70. Residues Asp-70 and Glu-138 each coordinate Mg(2+). CTP is bound by residues 145–147 (DIE), 185–190 (KTKPTQ), and Lys-221. Residues 185-190 (KTKPTQ) and Lys-221 each bind UTP. 237-239 (KDA) lines the ATP pocket. The Glutamine amidotransferase type-1 domain occupies 298 to 541 (YIMLKDAYTS…VKSALDKKLK (244 aa)). An L-glutamine-binding site is contributed by Gly-359. The active-site Nucleophile; for glutamine hydrolysis is Cys-386. L-glutamine contacts are provided by residues 387–390 (LGMQ), Glu-410, and Arg-467. Residues His-514 and Glu-516 contribute to the active site.

Belongs to the CTP synthase family. Homotetramer.

The catalysed reaction is UTP + L-glutamine + ATP + H2O = CTP + L-glutamate + ADP + phosphate + 2 H(+). The enzyme catalyses L-glutamine + H2O = L-glutamate + NH4(+). It carries out the reaction UTP + NH4(+) + ATP = CTP + ADP + phosphate + 2 H(+). The protein operates within pyrimidine metabolism; CTP biosynthesis via de novo pathway; CTP from UDP: step 2/2. With respect to regulation, allosterically activated by GTP, when glutamine is the substrate; GTP has no effect on the reaction when ammonia is the substrate. The allosteric effector GTP functions by stabilizing the protein conformation that binds the tetrahedral intermediate(s) formed during glutamine hydrolysis. Inhibited by the product CTP, via allosteric rather than competitive inhibition. Functionally, catalyzes the ATP-dependent amination of UTP to CTP with either L-glutamine or ammonia as the source of nitrogen. Regulates intracellular CTP levels through interactions with the four ribonucleotide triphosphates. The polypeptide is CTP synthase (Methanococcus aeolicus (strain ATCC BAA-1280 / DSM 17508 / OCM 812 / Nankai-3)).